The following is a 295-amino-acid chain: MASCMRSLFSDQGRYVESFRRFLNNSTEHQCMQEFMDKKLPGIIARIGEAKAEIKILSVGGGAGEVDLQILSKVQAQYPGICINNEVVEPSAEQIVKYKELVAKTSNMENIKFSWHKETSSEYQKRMLEEEEEPPKWDFIHMIQMLYYVKDIPATLKFFHGLLAASAKILIILVSGTSGWEKLWKKYGSRLPRDDLCQYVTSSDLAQILDDLGIKYECYDLVSTMDITDCFIDGNENGDLLWDFLTETCNFSKTAPLDLKAEIMKDLQEPEFSVKKEGKVLFNNNLSFIVVEANV.

Residue E28 coordinates substrate. S-adenosyl-L-methionine-binding residues include G60, E89, Q94, S120, and I143. Residue N284 coordinates substrate.

This sequence belongs to the class I-like SAM-binding methyltransferase superfamily. HNMT family. In terms of assembly, monomer.

It localises to the cytoplasm. It carries out the reaction histamine + S-adenosyl-L-methionine = N(tau)-methylhistamine + S-adenosyl-L-homocysteine + H(+). Inactivates histamine by N-methylation. Plays an important role in degrading histamine and in regulating the airway response to histamine. The sequence is that of Histamine N-methyltransferase (Hnmt) from Mus musculus (Mouse).